We begin with the raw amino-acid sequence, 528 residues long: G patch domain-containing protein 2 (528 aa).

The tract at residues 36 to 119 (LEESSEQARG…NKKDHSDSDD (84 aa)) is disordered. The segment covering 63–77 (RQARKRRGRKRRSYN) has biased composition (basic residues). Basic and acidic residues predominate over residues 98-117 (EPSKDYRENHNNNKKDHSDS). 4 positions are modified to phosphoserine: Ser115, Ser117, Ser146, and Ser195. 2 disordered regions span residues 232 to 282 (SEET…GDDE) and 487 to 528 (GRDG…GKSA). Residues 239 to 252 (NKDKMECEEQKVSD) show a composition bias toward basic and acidic residues. One can recognise a G-patch domain in the interval 467–513 (ENNIGNRMLQNMGWTPGSGLGRDGKGISEPIQAMQRPKGLGLGFPLP). Residues 514–528 (KSTSATTTPNAGKSA) are compositionally biased toward polar residues.

As to quaternary structure, interacts with DHX15. As to expression, testis.

It is found in the nucleus speckle. The protein localises to the nucleus. Its subcellular location is the nucleolus. Its function is as follows. Enhances the ATPase activity of DHX15 in vitro. This is G patch domain-containing protein 2 (GPATCH2) from Homo sapiens (Human).